We begin with the raw amino-acid sequence, 213 residues long: Protein-L-isoaspartate O-methyltransferase 1 (213 aa).

The active site involves Ser64.

The protein belongs to the methyltransferase superfamily. L-isoaspartyl/D-aspartyl protein methyltransferase family.

It is found in the cytoplasm. The enzyme catalyses [protein]-L-isoaspartate + S-adenosyl-L-methionine = [protein]-L-isoaspartate alpha-methyl ester + S-adenosyl-L-homocysteine. Functionally, catalyzes the methyl esterification of L-isoaspartyl residues in peptides and proteins that result from spontaneous decomposition of normal L-aspartyl and L-asparaginyl residues. It plays a role in the repair and/or degradation of damaged proteins. This Nitrosococcus oceani (strain ATCC 19707 / BCRC 17464 / JCM 30415 / NCIMB 11848 / C-107) protein is Protein-L-isoaspartate O-methyltransferase 1.